A 149-amino-acid chain; its full sequence is Cytochrome c-type biogenesis protein CcmE (149 aa).

Over 1 to 7 the chain is Cytoplasmic; that stretch reads MKKRHQR. The helical; Signal-anchor for type II membrane protein transmembrane segment at 8 to 28 threads the bilayer; it reads LFLVLGVVAGVSVATALVLNA. Residues 29-149 are Periplasmic-facing; sequence FRDNMTFFIT…EHSVDEVGDY (121 aa). Heme-binding residues include His123 and Tyr127.

It belongs to the CcmE/CycJ family.

Its subcellular location is the cell inner membrane. Functionally, heme chaperone required for the biogenesis of c-type cytochromes. Transiently binds heme delivered by CcmC and transfers the heme to apo-cytochromes in a process facilitated by CcmF and CcmH. This chain is Cytochrome c-type biogenesis protein CcmE, found in Halorhodospira halophila (strain DSM 244 / SL1) (Ectothiorhodospira halophila (strain DSM 244 / SL1)).